Consider the following 142-residue polypeptide: Large ribosomal subunit protein uL13 (142 aa).

Belongs to the universal ribosomal protein uL13 family. As to quaternary structure, part of the 50S ribosomal subunit.

Its function is as follows. This protein is one of the early assembly proteins of the 50S ribosomal subunit, although it is not seen to bind rRNA by itself. It is important during the early stages of 50S assembly. The chain is Large ribosomal subunit protein uL13 from Syntrophobacter fumaroxidans (strain DSM 10017 / MPOB).